The primary structure comprises 356 residues: D-alanine--D-alanine ligase (356 aa).

The ATP-grasp domain maps to 134-339 (KQLFEHRGLP…YPELITKLIE (206 aa)). 167–222 (NDKLNYPVFVKPANLGSSIGISKCSNEVELKEGIKEAFQFDRKLVIEQGVNAREIE) contacts ATP. Mg(2+)-binding residues include aspartate 293, glutamate 306, and asparagine 308.

This sequence belongs to the D-alanine--D-alanine ligase family. Requires Mg(2+) as cofactor. It depends on Mn(2+) as a cofactor.

The protein resides in the cytoplasm. The enzyme catalyses 2 D-alanine + ATP = D-alanyl-D-alanine + ADP + phosphate + H(+). It participates in cell wall biogenesis; peptidoglycan biosynthesis. Cell wall formation. The chain is D-alanine--D-alanine ligase from Staphylococcus aureus (strain MRSA252).